A 683-amino-acid polypeptide reads, in one-letter code: Long-chain-fatty-acid--CoA ligase 5 (683 aa).

A helical; Signal-anchor for type III membrane protein membrane pass occupies residues 12–32 (LPTPALICLLTFGTAIFLWLI). At 33–683 (NRPQPVLPLI…IKSLYESIEE (651 aa)) the chain is on the cytoplasmic side. K361 carries the post-translational modification N6-acetyllysine.

It belongs to the ATP-dependent AMP-binding enzyme family. As to expression, expressed most abundantly in the small intestine, and to a much lesser extent in the lung, liver, adrenal gland, adipose tissue and kidney.

It localises to the mitochondrion. It is found in the endoplasmic reticulum. Its subcellular location is the mitochondrion outer membrane. The protein localises to the endoplasmic reticulum membrane. The protein resides in the cell membrane. The catalysed reaction is a long-chain fatty acid + ATP + CoA = a long-chain fatty acyl-CoA + AMP + diphosphate. It carries out the reaction (5Z,8Z,11Z,14Z)-eicosatetraenoate + ATP + CoA = (5Z,8Z,11Z,14Z)-eicosatetraenoyl-CoA + AMP + diphosphate. It catalyses the reaction 15-hydroxy-(5Z,8Z,11Z,13E)-eicosatetraenoate + ATP + CoA = 15-hydroxy-(5Z,8Z,11Z,13E)-eicosatetraenoyl-CoA + AMP + diphosphate. The enzyme catalyses 12-hydroxy-(5Z,8Z,10E,14Z)-eicosatetraenoate + ATP + CoA = 12-hydroxy-(5Z,8Z,10E,14Z)-eicosatetraenoyl-CoA + AMP + diphosphate. The catalysed reaction is 5-hydroxy-(6E,8Z,11Z,14Z)-eicosatetraenoate + ATP + CoA = 5-hydroxy-(6E,8Z,11Z,14Z)-eicosatetraenoyl-CoA + AMP + diphosphate. It carries out the reaction 14,15-epoxy-(5Z,8Z,11Z)-eicosatrienoate + ATP + CoA = 14,15-epoxy-(5Z,8Z,11Z)-eicosatrienoyl-CoA + AMP + diphosphate. It catalyses the reaction 11,12-epoxy-(5Z,8Z,14Z)-eicosatrienoate + ATP + CoA = 11,12-epoxy-(5Z,8Z,14Z)-eicosatrienoyl-CoA + AMP + diphosphate. The enzyme catalyses hexadecanoate + ATP + CoA = hexadecanoyl-CoA + AMP + diphosphate. The catalysed reaction is (E)-hexadec-2-enoate + ATP + CoA = (2E)-hexadecenoyl-CoA + AMP + diphosphate. It carries out the reaction (9Z)-octadecenoate + ATP + CoA = (9Z)-octadecenoyl-CoA + AMP + diphosphate. Catalyzes the conversion of long-chain fatty acids to their active form acyl-CoAs for both synthesis of cellular lipids, and degradation via beta-oxidation. ACSL5 may sensitize epithelial cells to apoptosis specifically triggered by the death ligand TRAIL at the villus tip of the crypt-villus axis of the small intestine. May have a role in the survival of glioma cells. May activate fatty acids from exogenous sources for the synthesis of triacylglycerol destined for intracellular storage. It was suggested that it may also stimulate fatty acid oxidation. Utilizes a wide range of saturated fatty acids with a preference for C16-C18 unsaturated fatty acids. This Rattus norvegicus (Rat) protein is Long-chain-fatty-acid--CoA ligase 5.